Consider the following 114-residue polypeptide: Photosystem II reaction center Psb28 protein (114 aa).

Belongs to the Psb28 family. Part of the photosystem II complex.

Its subcellular location is the cellular thylakoid membrane. The protein is Photosystem II reaction center Psb28 protein of Rippkaea orientalis (strain PCC 8801 / RF-1) (Cyanothece sp. (strain PCC 8801)).